The following is a 90-amino-acid chain: U7-theraphotoxin-Hhn1a 1 (90 aa).

Residues 1-19 form the signal peptide; that stretch reads MKTAIFTVVLALAVFAVLS. Positions 20 to 50 are excised as a propeptide; it reads FGWEANEKALSEEFTELIHEKEAASETEARE. 3 disulfide bridges follow: Cys-51–Cys-65, Cys-58–Cys-70, and Cys-64–Cys-81.

Belongs to the neurotoxin 10 (Hwtx-1) family. 13 (Hntx-13) subfamily. Expressed by the venom gland.

The protein localises to the secreted. Functionally, ion channel inhibitor. The polypeptide is U7-theraphotoxin-Hhn1a 1 (Cyriopagopus hainanus (Chinese bird spider)).